Here is a 409-residue protein sequence, read N- to C-terminus: uncharacterized protein (409 aa).

10 helical membrane passes run 18–38, 47–67, 100–120, 159–179, 180–200, 232–252, 260–280, 302–322, 355–375, and 380–400; these read ALSA…ADVV, GPLL…TGVG, VVTV…ALVI, VGAM…GNAY, APAL…LLWL, FWLY…FGLL, GVLA…ADAL, ILSI…VVIG, GVFA…IGWL, and IGTL…MMFA.

The protein localises to the cell membrane. This is an uncharacterized protein from Mycobacterium tuberculosis (strain CDC 1551 / Oshkosh).